The primary structure comprises 202 residues: Dephospho-CoA kinase (202 aa).

The DPCK domain occupies 4–202 (FLGLTGGIAT…EGVCHKSGMS (199 aa)). Residue 12–17 (ATGKTT) participates in ATP binding.

The protein belongs to the CoaE family.

It localises to the cytoplasm. It carries out the reaction 3'-dephospho-CoA + ATP = ADP + CoA + H(+). It functions in the pathway cofactor biosynthesis; coenzyme A biosynthesis; CoA from (R)-pantothenate: step 5/5. Catalyzes the phosphorylation of the 3'-hydroxyl group of dephosphocoenzyme A to form coenzyme A. In Latilactobacillus sakei subsp. sakei (strain 23K) (Lactobacillus sakei subsp. sakei), this protein is Dephospho-CoA kinase.